The sequence spans 108 residues: Holo-[acyl-carrier-protein] synthase (108 aa).

Mg(2+) is bound by residues D9 and E52.

Belongs to the P-Pant transferase superfamily. AcpS family. It depends on Mg(2+) as a cofactor.

It is found in the cytoplasm. The catalysed reaction is apo-[ACP] + CoA = holo-[ACP] + adenosine 3',5'-bisphosphate + H(+). Its function is as follows. Transfers the 4'-phosphopantetheine moiety from coenzyme A to a Ser of acyl-carrier-protein. The protein is Holo-[acyl-carrier-protein] synthase of Coprothermobacter proteolyticus (strain ATCC 35245 / DSM 5265 / OCM 4 / BT).